The primary structure comprises 211 residues: Probable superoxide dismutase [Mn], mitochondrial (211 aa).

4 residues coordinate Mn(2+): His-36, His-84, Asp-173, and His-177.

This sequence belongs to the iron/manganese superoxide dismutase family. In terms of assembly, homotetramer. Mn(2+) serves as cofactor.

The protein resides in the mitochondrion matrix. It catalyses the reaction 2 superoxide + 2 H(+) = H2O2 + O2. In terms of biological role, destroys superoxide anion radicals which are normally produced within the cells and which are toxic to biological systems. In Debaryomyces hansenii (strain ATCC 36239 / CBS 767 / BCRC 21394 / JCM 1990 / NBRC 0083 / IGC 2968) (Yeast), this protein is Probable superoxide dismutase [Mn], mitochondrial.